We begin with the raw amino-acid sequence, 248 residues long: Probable transcriptional regulatory protein AZC_0510 (248 aa).

The protein belongs to the TACO1 family.

The protein resides in the cytoplasm. The polypeptide is Probable transcriptional regulatory protein AZC_0510 (Azorhizobium caulinodans (strain ATCC 43989 / DSM 5975 / JCM 20966 / LMG 6465 / NBRC 14845 / NCIMB 13405 / ORS 571)).